A 764-amino-acid chain; its full sequence is Irregular chiasm C-roughest protein (764 aa).

The signal sequence occupies residues 1 to 19; sequence MLHTMQLLLLATIVGMVRS. At 20 to 533 the chain is on the extracellular side; the sequence is SPYTSYQNQR…QAKKSVSLLM (514 aa). Ig-like C2-type domains follow at residues 21–120, 132–230, 237–343, 346–419, and 430–530; these read PYTS…PAIR, PEAP…AKIR, PKVK…LDIS, PSFR…AEIS, and PAIG…KSVS. Cystine bridges form between C49–C107, C155–C214, C281–C325, C367–C408, and C450–C508. Residues N211, N313, N393, N400, and N507 are each glycosylated (N-linked (GlcNAc...) asparagine). A helical membrane pass occupies residues 534–556; the sequence is TIVGGISVVAFLLVLTILVVVYI. Over 557–764 the chain is Cytoplasmic; that stretch reads KCKKRTKLPP…SSLLPPPTAV (208 aa). 2 disordered regions span residues 640 to 660 and 691 to 719; these read HQNQ…HHTQ and NGLP…STTA. The span at 692-701 shows a compositional bias: polar residues; that stretch reads GLPSLQSTTA. Positions 702-719 are enriched in low complexity; sequence SVVSSSPNGSCSNQSTTA.

In terms of tissue distribution, postembryonic expression is strong in the developing optic lobe and in the eye imaginal disk.

It localises to the membrane. In terms of biological role, required for correct axonal pathway formation in the optic lobe and for programmed cell death in the developing retina. In Drosophila melanogaster (Fruit fly), this protein is Irregular chiasm C-roughest protein (rst).